Here is a 96-residue protein sequence, read N- to C-terminus: Large ribosomal subunit protein uL23 (96 aa).

It belongs to the universal ribosomal protein uL23 family. In terms of assembly, part of the 50S ribosomal subunit. Contacts protein L29, and trigger factor when it is bound to the ribosome.

In terms of biological role, one of the early assembly proteins it binds 23S rRNA. One of the proteins that surrounds the polypeptide exit tunnel on the outside of the ribosome. Forms the main docking site for trigger factor binding to the ribosome. The sequence is that of Large ribosomal subunit protein uL23 from Enterococcus faecalis (strain ATCC 700802 / V583).